A 379-amino-acid chain; its full sequence is Homoserine O-succinyltransferase (379 aa).

One can recognise an AB hydrolase-1 domain in the interval 51–360 (NAVLICHALS…DAPQGHDAFL (310 aa)). Catalysis depends on serine 157, which acts as the Nucleophile. Arginine 227 lines the substrate pocket. Active-site residues include aspartate 323 and histidine 356. Residue aspartate 357 participates in substrate binding.

It belongs to the AB hydrolase superfamily. MetX family. Homodimer.

The protein resides in the cytoplasm. It carries out the reaction L-homoserine + succinyl-CoA = O-succinyl-L-homoserine + CoA. It functions in the pathway amino-acid biosynthesis; L-methionine biosynthesis via de novo pathway; O-succinyl-L-homoserine from L-homoserine: step 1/1. In terms of biological role, transfers a succinyl group from succinyl-CoA to L-homoserine, forming succinyl-L-homoserine. This chain is Homoserine O-succinyltransferase, found in Pseudomonas paraeruginosa (strain DSM 24068 / PA7) (Pseudomonas aeruginosa (strain PA7)).